The primary structure comprises 915 residues: MAAVLEGQEPEETAAAAEDAATSTLEAVDAGPGAPFLPAGNQLNLDLRPGGCHRLQYLCSQQPPQLLQVEFLRLSTHEDPQLLDDTLAKVPWSLLRLRSLVLKGGQSRGALGACLHGTLTTLPAGLSDLACLAHLDLSFNRLETLPTCVPELHGLDALLLSHNHLSELPEALGALPALTFLTVTHNRLERLPLTLGSLSTLQRLDLSENLLDTIPSEIGNLRSLSELNLASNRLQSLPASLAGLRSLRLLVLHSNLLTSVPTGLVHLPLITRLDLRDNRLRDLPAELLDAPFVRLQGNPLGEASPAPPSPPDISQVPEMPRLLLTSDLDSFLVTPHGCSVTLACGVRLQFPAGATTTPVTIHYRLWLPEPGLVSLGPHDFLLSSVLELQPHGVAFQQDVSLWLLFVPPRVRRCREVVVRTRSNNTWNDLETQLEEEAPKRLWARCQVPHFSWFLVVLRPVSNTCLLPPEGALLCSSGHPGVRVTFPPGVTEEPRQVSMQVVHMAGLELRTLLEESEASVSPLLCLSQSGPPSFLQPVTVQLPLPPGVTGFSLDRSHLHLLYRTPLTTTWDDITTQVALEFTHLYARFQVTHFSWYWLWYTTKTCVGGLARKAWERLRLHRVNLIALQRRRDPEQVLLQCLPRNKVDATLSRLLVRYRGPEPSETVEMFEGEKFFAAFERGIDVDADRPDCVDGRICFVFYSHLKNVKEVYITTALDREAQDVRGQVSFYRGSLPVEVPAEAEAARQRKGTDALWMATLPIKLPRLRGAQGSGQGTDFSLMPLNLGDAETGFLTQSNLLSVASRLGPDWPAVALHLGMPYHKLQRIRHEFRDDLDGQVRHMLFSWAERQTGQPGAVGHLVQALEQSDRRDVAEEVRAILELGRHKYQDSIRRTGLAPEDSTLPGTSASQTPESAQA.

Ala-2 is subject to N-acetylalanine. LRR repeat units follow at residues 131 to 152 (CLAH…VPEL), 154 to 176 (GLDA…GALP), 177 to 199 (ALTF…GSLS), 200 to 221 (TLQR…IGNL), 223 to 245 (SLSE…AGLR), 246 to 268 (SLRL…VHLP), and 269 to 290 (LITR…LLDA). Ser-304 bears the Phosphoserine mark. ZU5 domains are found at residues 327 to 459 (DLDS…VLRP) and 460 to 601 (VSNT…WYTT). Peptidase S68 stretches follow at residues 428–457 (DLET…LVVL) and 571–599 (DITT…WLWY). Residues His-449, Ser-451, His-591, and Ser-593 contribute to the active site. The tract at residues 585–721 (ARFQVTHFSW…TTALDREAQD (137 aa)) is UPA domain. A Death domain is found at 793–878 (TQSNLLSVAS…DVAEEVRAIL (86 aa)). Positions 888-915 (SIRRTGLAPEDSTLPGTSASQTPESAQA) are disordered. The span at 901-915 (LPGTSASQTPESAQA) shows a compositional bias: polar residues.

Forms a complex named the PIDDosome with CASP2 and CRADD. Forms a complex with IKBKG and RIPK1. Interacts with FADD and MADD. In terms of processing, undergoes autoproteolytic processing whose extent either directs cells towards survival or apoptotic pathways. Autoproteolytically cleaved into two main fragments PIDD-N and PIDD-C. PIDD-C can be further processed into PIDD-CC, a processing which is enhanced by DNA damage. The cleavage producing PIDD-C is required for translocation of PIDD1 to the nucleus upon DNA damage and activation of NF-kappa-B. PIDD-CC mediates the interaction with CRADD and the cleavage producing PIDD-CC is required for the activation of CASP2. PIDD-N remains associated with PIDD-C and PIDD-CC after cleavage. As to expression, ubiquitous.

The protein localises to the cytoplasm. It localises to the nucleus. Component of the DNA damage/stress response pathway that functions downstream of p53/TP53 and can either promote cell survival or apoptosis. Associated with CRADD and the CASP2 caspase, it forms the PIDDosome a complex that activates CASP2 and triggers apoptosis. Associated with IKBKG and RIPK1, it enhances sumoylation and ubiquitination of IKBKG which is important for activation of the transcription factor NF-kappa-B. This Mus musculus (Mouse) protein is p53-induced death domain-containing protein 1.